The following is a 151-amino-acid chain: Large ribosomal subunit protein uL15 (151 aa).

Residues methionine 1–arginine 14 show a composition bias toward basic residues. Residues methionine 1 to arginine 33 are disordered.

The protein belongs to the universal ribosomal protein uL15 family. As to quaternary structure, part of the 50S ribosomal subunit.

Its function is as follows. Binds to the 23S rRNA. This is Large ribosomal subunit protein uL15 from Thermofilum pendens (strain DSM 2475 / Hrk 5).